The chain runs to 143 residues: Large ribosomal subunit protein uL13 (143 aa).

Belongs to the universal ribosomal protein uL13 family. In terms of assembly, part of the 50S ribosomal subunit.

This protein is one of the early assembly proteins of the 50S ribosomal subunit, although it is not seen to bind rRNA by itself. It is important during the early stages of 50S assembly. The polypeptide is Large ribosomal subunit protein uL13 (Prochlorococcus marinus (strain MIT 9312)).